Consider the following 127-residue polypeptide: Methylglyoxal synthase (127 aa).

Positions 1–127 (MEKKIALIAH…IKGLESLILR (127 aa)) constitute an MGS-like domain. Substrate contacts are provided by residues histidine 10, lysine 14, 36-39 (TGTT), and 56-57 (SG). Aspartate 62 acts as the Proton donor/acceptor in catalysis. Histidine 89 lines the substrate pocket.

The protein belongs to the methylglyoxal synthase family.

The catalysed reaction is dihydroxyacetone phosphate = methylglyoxal + phosphate. Functionally, catalyzes the formation of methylglyoxal from dihydroxyacetone phosphate. The sequence is that of Methylglyoxal synthase from Borreliella afzelii (strain PKo) (Borrelia afzelii).